A 957-amino-acid chain; its full sequence is Glycine dehydrogenase (decarboxylating) (957 aa).

K708 carries the N6-(pyridoxal phosphate)lysine modification.

It belongs to the GcvP family. The glycine cleavage system is composed of four proteins: P, T, L and H. Requires pyridoxal 5'-phosphate as cofactor.

The catalysed reaction is N(6)-[(R)-lipoyl]-L-lysyl-[glycine-cleavage complex H protein] + glycine + H(+) = N(6)-[(R)-S(8)-aminomethyldihydrolipoyl]-L-lysyl-[glycine-cleavage complex H protein] + CO2. In terms of biological role, the glycine cleavage system catalyzes the degradation of glycine. The P protein binds the alpha-amino group of glycine through its pyridoxal phosphate cofactor; CO(2) is released and the remaining methylamine moiety is then transferred to the lipoamide cofactor of the H protein. This Salmonella newport (strain SL254) protein is Glycine dehydrogenase (decarboxylating).